Consider the following 229-residue polypeptide: ATP synthase subunit a 3 (229 aa).

6 consecutive transmembrane segments (helical) span residues Ala-25–Ala-45, Val-86–Phe-106, Asn-111–Ile-131, Phe-142–Leu-162, Leu-181–Met-201, and Gly-202–Gln-222.

Belongs to the ATPase A chain family. In terms of assembly, F-type ATPases have 2 components, CF(1) - the catalytic core - and CF(0) - the membrane proton channel. CF(1) has five subunits: alpha(3), beta(3), gamma(1), delta(1), epsilon(1). CF(0) has three main subunits: a(1), b(2) and c(9-12). The alpha and beta chains form an alternating ring which encloses part of the gamma chain. CF(1) is attached to CF(0) by a central stalk formed by the gamma and epsilon chains, while a peripheral stalk is formed by the delta and b chains.

It localises to the cell inner membrane. In terms of biological role, key component of the proton channel; it plays a direct role in the translocation of protons across the membrane. The chain is ATP synthase subunit a 3 from Pelobacter propionicus (strain DSM 2379 / NBRC 103807 / OttBd1).